We begin with the raw amino-acid sequence, 140 residues long: ATP synthase epsilon chain (140 aa).

This sequence belongs to the ATPase epsilon chain family. As to quaternary structure, F-type ATPases have 2 components, CF(1) - the catalytic core - and CF(0) - the membrane proton channel. CF(1) has five subunits: alpha(3), beta(3), gamma(1), delta(1), epsilon(1). CF(0) has three main subunits: a, b and c.

It is found in the cell inner membrane. In terms of biological role, produces ATP from ADP in the presence of a proton gradient across the membrane. This Nitrosomonas europaea (strain ATCC 19718 / CIP 103999 / KCTC 2705 / NBRC 14298) protein is ATP synthase epsilon chain.